The chain runs to 193 residues: Thioredoxin peroxidase (193 aa).

One can recognise a Thioredoxin domain in the interval A3–F161. The active-site Cysteine sulfenic acid (-SOH) intermediate is C48.

The protein belongs to the peroxiredoxin family. AhpC/Prx1 subfamily. As to quaternary structure, homodimer; disulfide-linked, upon oxidation.

It catalyses the reaction a hydroperoxide + [thioredoxin]-dithiol = an alcohol + [thioredoxin]-disulfide + H2O. Functionally, thiol-specific peroxidase that catalyzes the reduction of hydrogen peroxide and organic hydroperoxides to water and alcohols, respectively. Plays a role in cell protection against oxidative stress by detoxifying peroxides and as sensor of hydrogen peroxide-mediated signaling events. The sequence is that of Thioredoxin peroxidase (TPX) from Echinococcus granulosus (Hydatid tapeworm).